A 374-amino-acid chain; its full sequence is Putative glutamate--cysteine ligase 2-2 (374 aa).

Belongs to the glutamate--cysteine ligase type 2 family. YbdK subfamily.

The enzyme catalyses L-cysteine + L-glutamate + ATP = gamma-L-glutamyl-L-cysteine + ADP + phosphate + H(+). ATP-dependent carboxylate-amine ligase which exhibits weak glutamate--cysteine ligase activity. The protein is Putative glutamate--cysteine ligase 2-2 of Rhodococcus jostii (strain RHA1).